A 381-amino-acid chain; its full sequence is Protein pelota homolog (381 aa).

It belongs to the eukaryotic release factor 1 family. Pelota subfamily. As to quaternary structure, component of the Pelota-HBS1L complex, also named Dom34-Hbs1 complex, composed of pelo-1 and hbs-1. A divalent metal cation serves as cofactor.

Its subcellular location is the cytoplasm. The protein localises to the nucleus. Functionally, component of the Pelota-HBS1L complex, a complex that recognizes stalled ribosomes and triggers the No-Go Decay (NGD) pathway. In the Pelota-HBS1L complex, pelo-1 recognizes ribosomes stalled at the 3' end of an mRNA and engages stalled ribosomes by destabilizing mRNA in the mRNA channel. Following ribosome-binding, the Pelota-HBS1L complex promotes the disassembly of stalled ribosomes, followed by degradation of damaged mRNAs as part of the NGD pathway. This chain is Protein pelota homolog, found in Caenorhabditis elegans.